An 80-amino-acid chain; its full sequence is Exodeoxyribonuclease 7 small subunit (80 aa).

This sequence belongs to the XseB family. Heterooligomer composed of large and small subunits.

It localises to the cytoplasm. It carries out the reaction Exonucleolytic cleavage in either 5'- to 3'- or 3'- to 5'-direction to yield nucleoside 5'-phosphates.. Its function is as follows. Bidirectionally degrades single-stranded DNA into large acid-insoluble oligonucleotides, which are then degraded further into small acid-soluble oligonucleotides. The chain is Exodeoxyribonuclease 7 small subunit from Rickettsia canadensis (strain McKiel).